We begin with the raw amino-acid sequence, 314 residues long: Acetaldehyde dehydrogenase 2 (314 aa).

11-14 serves as a coordination point for NAD(+); the sequence is SGNI. Cys-129 acts as the Acyl-thioester intermediate in catalysis. NAD(+) contacts are provided by residues 160–168 and Asn-291; that span reads SAGPGTRAN.

Belongs to the acetaldehyde dehydrogenase family.

It catalyses the reaction acetaldehyde + NAD(+) + CoA = acetyl-CoA + NADH + H(+). In Rhodococcus erythropolis (strain PR4 / NBRC 100887), this protein is Acetaldehyde dehydrogenase 2.